A 147-amino-acid polypeptide reads, in one-letter code: Transcriptional repressor NrdR (147 aa).

A zinc finger lies at 3–34 (CPYCGNVETTVVETRESDEGDAVRRRRRCSAC). The region spanning 49-139 (PAVVKKNGDR…VYREFEDIDA (91 aa)) is the ATP-cone domain.

Belongs to the NrdR family. The cofactor is Zn(2+).

Functionally, negatively regulates transcription of bacterial ribonucleotide reductase nrd genes and operons by binding to NrdR-boxes. This chain is Transcriptional repressor NrdR, found in Leptothrix cholodnii (strain ATCC 51168 / LMG 8142 / SP-6) (Leptothrix discophora (strain SP-6)).